Consider the following 359-residue polypeptide: UDP-3-O-acylglucosamine N-acyltransferase (359 aa).

The active-site Proton acceptor is the H248.

Belongs to the transferase hexapeptide repeat family. LpxD subfamily. In terms of assembly, homotrimer.

It carries out the reaction a UDP-3-O-[(3R)-3-hydroxyacyl]-alpha-D-glucosamine + a (3R)-hydroxyacyl-[ACP] = a UDP-2-N,3-O-bis[(3R)-3-hydroxyacyl]-alpha-D-glucosamine + holo-[ACP] + H(+). The protein operates within bacterial outer membrane biogenesis; LPS lipid A biosynthesis. Its function is as follows. Catalyzes the N-acylation of UDP-3-O-acylglucosamine using 3-hydroxyacyl-ACP as the acyl donor. Is involved in the biosynthesis of lipid A, a phosphorylated glycolipid that anchors the lipopolysaccharide to the outer membrane of the cell. This is UDP-3-O-acylglucosamine N-acyltransferase from Chlamydia felis (strain Fe/C-56) (Chlamydophila felis).